The primary structure comprises 373 residues: Probable cysteine protease RD19C (373 aa).

A signal peptide spans 1 to 20 (MDRVVFFFLIAATLLAGSLG). The propeptide at 21-139 (STVISGEVTD…QTAPILPTSD (119 aa)) is activation peptide. Intrachain disulfides connect Cys-161-Cys-211 and Cys-195-Cys-245. Residue Cys-164 is part of the active site. Asn-258 carries an N-linked (GlcNAc...) asparagine glycan. Cys-301 and Cys-356 form a disulfide bridge. Active-site residues include His-307 and Asn-334.

It belongs to the peptidase C1 family.

It localises to the lytic vacuole. Functionally, probable thiol protease. The protein is Probable cysteine protease RD19C of Arabidopsis thaliana (Mouse-ear cress).